Reading from the N-terminus, the 325-residue chain is Phosphate acyltransferase (325 aa).

It belongs to the PlsX family. In terms of assembly, homodimer. Probably interacts with PlsY.

The protein localises to the cytoplasm. It catalyses the reaction a fatty acyl-[ACP] + phosphate = an acyl phosphate + holo-[ACP]. It participates in lipid metabolism; phospholipid metabolism. Functionally, catalyzes the reversible formation of acyl-phosphate (acyl-PO(4)) from acyl-[acyl-carrier-protein] (acyl-ACP). This enzyme utilizes acyl-ACP as fatty acyl donor, but not acyl-CoA. This is Phosphate acyltransferase from Staphylococcus epidermidis (strain ATCC 35984 / DSM 28319 / BCRC 17069 / CCUG 31568 / BM 3577 / RP62A).